Here is a 537-residue protein sequence, read N- to C-terminus: Cytoplasmic 60S subunit biogenesis factor REI1 homolog (537 aa).

2 C2H2-type zinc fingers span residues 18-42 and 83-107; these read YTCN…SDWH and KTCE…STKH. Disordered stretches follow at residues 101 to 151 and 163 to 204; these read HLSS…AEEE and SIHD…PEAL. Low complexity predominate over residues 192–204; the sequence is EETPTTTPKPEAL. The C2H2-type 3 zinc-finger motif lies at 260–284; sequence NECLTCGKMKVNVFAIQTHMRDKSH. A compositionally biased stretch (acidic residues) spans 312–322; sequence DWETEEEDKGE. 2 disordered regions span residues 312 to 361 and 382 to 401; these read DWET…ASSL and GKHP…ADGI. Positions 323-339 are enriched in basic and acidic residues; it reads EDGGVRLGAKRESKVVD. Residues 340 to 356 show a composition bias toward acidic residues; sequence ENGDEVMEDEEGWETDS. Positions 383-395 are enriched in basic residues; that stretch reads KHPHHSRENKKAH.

Belongs to the REI1 family. In terms of assembly, associates with nascent pre-60S particles that have not yet entered the translating pool, and is released from mature 60S subunits.

It localises to the cytoplasm. Functionally, pre-60S-associated factor involved in the cytoplasmic maturation of the 60S subunit. Involved in the dissociation and recycling of other late pre-60S factors before newly synthesized large ribosomal subunits enter translation. This Chaetomium thermophilum (strain DSM 1495 / CBS 144.50 / IMI 039719) (Thermochaetoides thermophila) protein is Cytoplasmic 60S subunit biogenesis factor REI1 homolog.